The chain runs to 118 residues: Myotrophin (118 aa).

ANK repeat units lie at residues methionine 1–arginine 30, glycine 34–aspartate 65, and histidine 67–glycine 98.

Belongs to the myotrophin family.

Its subcellular location is the cytoplasm. It is found in the nucleus. The protein localises to the perinuclear region. In terms of biological role, regulates NF-kappa-B transcription factor activity. Promotes growth of cardiomyocytes, but not cardiomyocyte proliferation. Promotes cardiac muscle hypertrophy. Plays a role in the regulation of the growth of actin filaments. Inhibits the activity of the F-actin-capping protein complex. This chain is Myotrophin (mtpn), found in Danio rerio (Zebrafish).